The chain runs to 805 residues: U-box domain-containing protein 70 (805 aa).

TPR repeat units lie at residues Ala15–Asp48, Ile49–Leu82, Ala90–Glu127, Thr129–Ala153, Ala154–Asp187, Arg189–Phe221, and Leu222–Asn255. Residues Ala136–Arg160 form a disordered region. Residues Arg341 to Lys417 are a coiled coil. One can recognise a Protein kinase domain in the interval Phe445–Ile711. Residues Ile451 to Val459 and Lys472 each bind ATP. Asp567 acts as the Proton acceptor in catalysis. One can recognise a U-box domain in the interval Ser730–Ser804.

This sequence belongs to the protein kinase superfamily. Ser/Thr protein kinase family. In terms of assembly, interacts with MODD.

The enzyme catalyses L-seryl-[protein] + ATP = O-phospho-L-seryl-[protein] + ADP + H(+). The catalysed reaction is L-threonyl-[protein] + ATP = O-phospho-L-threonyl-[protein] + ADP + H(+). It carries out the reaction S-ubiquitinyl-[E2 ubiquitin-conjugating enzyme]-L-cysteine + [acceptor protein]-L-lysine = [E2 ubiquitin-conjugating enzyme]-L-cysteine + N(6)-ubiquitinyl-[acceptor protein]-L-lysine.. It participates in protein modification; protein ubiquitination. Functions as an E3 ubiquitin ligase. Is recruited by MODD to promote ubiquitination of BZIP46, a positive regulator of abscisic acid (ABA) signaling and drought stress tolerance. The sequence is that of U-box domain-containing protein 70 from Oryza sativa subsp. japonica (Rice).